The primary structure comprises 383 residues: Dual-specificity RNA methyltransferase RlmN (383 aa).

Glu95 serves as the catalytic Proton acceptor. Positions 101 to 349 (EETRGTLCVS…TTVRKTRGDD (249 aa)) constitute a Radical SAM core domain. An intrachain disulfide couples Cys108 to Cys354. The [4Fe-4S] cluster site is built by Cys115, Cys119, and Cys122. S-adenosyl-L-methionine is bound by residues 180-181 (GE), Ser212, 234-236 (SLH), and Asn311. Catalysis depends on Cys354, which acts as the S-methylcysteine intermediate.

This sequence belongs to the radical SAM superfamily. RlmN family. It depends on [4Fe-4S] cluster as a cofactor.

The protein resides in the cytoplasm. It carries out the reaction adenosine(2503) in 23S rRNA + 2 reduced [2Fe-2S]-[ferredoxin] + 2 S-adenosyl-L-methionine = 2-methyladenosine(2503) in 23S rRNA + 5'-deoxyadenosine + L-methionine + 2 oxidized [2Fe-2S]-[ferredoxin] + S-adenosyl-L-homocysteine. The enzyme catalyses adenosine(37) in tRNA + 2 reduced [2Fe-2S]-[ferredoxin] + 2 S-adenosyl-L-methionine = 2-methyladenosine(37) in tRNA + 5'-deoxyadenosine + L-methionine + 2 oxidized [2Fe-2S]-[ferredoxin] + S-adenosyl-L-homocysteine. In terms of biological role, specifically methylates position 2 of adenine 2503 in 23S rRNA and position 2 of adenine 37 in tRNAs. m2A2503 modification seems to play a crucial role in the proofreading step occurring at the peptidyl transferase center and thus would serve to optimize ribosomal fidelity. The chain is Dual-specificity RNA methyltransferase RlmN from Paraburkholderia phytofirmans (strain DSM 17436 / LMG 22146 / PsJN) (Burkholderia phytofirmans).